A 258-amino-acid chain; its full sequence is Imidazole glycerol phosphate synthase subunit HisF (258 aa).

Catalysis depends on residues Asp-11 and Asp-130.

The protein belongs to the HisA/HisF family. In terms of assembly, heterodimer of HisH and HisF.

The protein localises to the cytoplasm. It carries out the reaction 5-[(5-phospho-1-deoxy-D-ribulos-1-ylimino)methylamino]-1-(5-phospho-beta-D-ribosyl)imidazole-4-carboxamide + L-glutamine = D-erythro-1-(imidazol-4-yl)glycerol 3-phosphate + 5-amino-1-(5-phospho-beta-D-ribosyl)imidazole-4-carboxamide + L-glutamate + H(+). Its pathway is amino-acid biosynthesis; L-histidine biosynthesis; L-histidine from 5-phospho-alpha-D-ribose 1-diphosphate: step 5/9. In terms of biological role, IGPS catalyzes the conversion of PRFAR and glutamine to IGP, AICAR and glutamate. The HisF subunit catalyzes the cyclization activity that produces IGP and AICAR from PRFAR using the ammonia provided by the HisH subunit. The protein is Imidazole glycerol phosphate synthase subunit HisF of Azorhizobium caulinodans (strain ATCC 43989 / DSM 5975 / JCM 20966 / LMG 6465 / NBRC 14845 / NCIMB 13405 / ORS 571).